Consider the following 262-residue polypeptide: MSNSPTNMPMRDLLQAGAHFGHQTRFWNPKMNQYIFGARNKIHIINLEHTVKAFNEALTYVNGLAAKNNKVLFVGTKRAASGVIREQALRAGQPYVDHRWLGGMLTNWKTLRQSINRLKELEKQAEDGTFAKLTKREALERTRAMEKLERSLGGIKNMGGLPDAIFVVDVDHEAIAIKEAKNLGIPVIGIVDTNSNPDNVDYIIPANDDAIRAVTLYVTRMADAIIAGKEYAKTQAGGAAEAPAAEDVQTEEAAAPEADSAE.

The tract at residues 236–262 (AGGAAEAPAAEDVQTEEAAAPEADSAE) is disordered.

The protein belongs to the universal ribosomal protein uS2 family.

This Psychrobacter sp. (strain PRwf-1) protein is Small ribosomal subunit protein uS2.